Reading from the N-terminus, the 484-residue chain is tRNA-2-methylthio-N(6)-dimethylallyladenosine synthase (484 aa).

An MTTase N-terminal domain is found at 36–153 (GKLYIKTHGC…LPELIRARRE (118 aa)). Residues Cys45, Cys82, Cys116, Cys190, Cys194, and Cys197 each coordinate [4Fe-4S] cluster. Residues 176–415 (RAEGPSAFVS…HISAHAASIS (240 aa)) enclose the Radical SAM core domain. Positions 416–479 (QSMVGSVQRV…SNSLRGRIQL (64 aa)) constitute a TRAM domain. Positions 428–450 (EGPSRRDPNELTGKSENMRPVNF) are disordered.

Belongs to the methylthiotransferase family. MiaB subfamily. In terms of assembly, monomer. [4Fe-4S] cluster serves as cofactor.

It is found in the cytoplasm. It catalyses the reaction N(6)-dimethylallyladenosine(37) in tRNA + (sulfur carrier)-SH + AH2 + 2 S-adenosyl-L-methionine = 2-methylsulfanyl-N(6)-dimethylallyladenosine(37) in tRNA + (sulfur carrier)-H + 5'-deoxyadenosine + L-methionine + A + S-adenosyl-L-homocysteine + 2 H(+). In terms of biological role, catalyzes the methylthiolation of N6-(dimethylallyl)adenosine (i(6)A), leading to the formation of 2-methylthio-N6-(dimethylallyl)adenosine (ms(2)i(6)A) at position 37 in tRNAs that read codons beginning with uridine. The polypeptide is tRNA-2-methylthio-N(6)-dimethylallyladenosine synthase (Xanthomonas oryzae pv. oryzae (strain KACC10331 / KXO85)).